The sequence spans 423 residues: Glucose-1-phosphate adenylyltransferase 1 (423 aa).

Residues Tyr111, Gly176, 191–192 (EK), and Ser209 contribute to the alpha-D-glucose 1-phosphate site.

The protein belongs to the bacterial/plant glucose-1-phosphate adenylyltransferase family. In terms of assembly, homotetramer.

The catalysed reaction is alpha-D-glucose 1-phosphate + ATP + H(+) = ADP-alpha-D-glucose + diphosphate. The protein operates within glycan biosynthesis; glycogen biosynthesis. Functionally, involved in the biosynthesis of ADP-glucose, a building block required for the elongation reactions to produce glycogen. Catalyzes the reaction between ATP and alpha-D-glucose 1-phosphate (G1P) to produce pyrophosphate and ADP-Glc. The sequence is that of Glucose-1-phosphate adenylyltransferase 1 from Alkalilimnicola ehrlichii (strain ATCC BAA-1101 / DSM 17681 / MLHE-1).